A 344-amino-acid chain; its full sequence is Interferon gamma receptor 1-like (344 aa).

The N-terminal stretch at 1-22 (MSKHAVVQFGVVYALLFPGVFG) is a signal peptide. Over 23–229 (FVPSPTNVSV…QPTPETDKTG (207 aa)) the chain is Extracellular. Residues 24 to 102 (VPSPTNVSVV…TAHDGQEKSE (79 aa)) form the Fibronectin type-III domain. Residues Asn29, Asn44, Asn132, and Asn189 are each glycosylated (N-linked (GlcNAc...) asparagine). Residues 230-250 (IIAALIGGATVVLFIIMGFVW) traverse the membrane as a helical segment. Over 251-344 (LLWRKWSNIP…SSDYDRPKFL (94 aa)) the chain is Cytoplasmic. The segment at 300–344 (TEEDQSVSARDDTGADPPVVSEEGMAGEDSQGLGCSSDYDRPKFL) is disordered.

It belongs to the type II cytokine receptor family. Highly expressed in brain. Also detected in spleen, heart, intestine, gill and kidney. In immune cell populations, detected at low levels in monocytes, peripheral blood leukocytes, splenocytes, neutrophils and mature macrophages.

It is found in the cell membrane. Its function is as follows. Receptor which shows binding specificity for the cytokine ifng1 (interferon gamma 1). The chain is Interferon gamma receptor 1-like from Carassius auratus (Goldfish).